Consider the following 143-residue polypeptide: Small ribosomal subunit protein uS9 (143 aa).

Residues 118-143 (DSRRTEPHKPNRSTKGPRAKRQKSYR) form a disordered region. Over residues 127–143 (PNRSTKGPRAKRQKSYR) the composition is skewed to basic residues.

It belongs to the universal ribosomal protein uS9 family.

This Thermococcus sibiricus (strain DSM 12597 / MM 739) protein is Small ribosomal subunit protein uS9.